Consider the following 377-residue polypeptide: Benzylmalonyl-CoA dehydrogenase (377 aa).

FAD-binding positions include 123-132 (ICMTEPNAGS), 156-158 (WIT), R266, Q277, and 363-365 (TSE).

This sequence belongs to the acyl-CoA dehydrogenase family. In terms of assembly, homotetramer. FAD is required as a cofactor.

It catalyses the reaction (2-aminobenzyl)malonyl-CoA + O2 + H(+) = (E)-2-aminocinnamoyl-CoA + H2O2 + CO2. The enzyme catalyses benzylmalonyl-CoA + O2 + H(+) = (E)-cinnamoyl-CoA + H2O2 + CO2. Functionally, involved in degradation of indoleacetate, the most common member of the auxin class of plant hormones. Catalyzes the irreversible oxidative decarboxylation of (2-aminobenzyl)malonyl-CoA to 2-aminocinnamoyl-CoA and CO(2). In vitro, shows high catalytic efficiency with benzylmalonyl-CoA, a chemical analog of the physiological substrate, but otherwise accepts only a few medium-chain alkylmalonyl-CoA compounds as alternative substrates with low activities. The protein is Benzylmalonyl-CoA dehydrogenase of Aromatoleum aromaticum (strain DSM 19018 / LMG 30748 / EbN1) (Azoarcus sp. (strain EbN1)).